A 334-amino-acid polypeptide reads, in one-letter code: Holliday junction branch migration complex subunit RuvB (334 aa).

Residues 1-182 are large ATPase domain (RuvB-L); that stretch reads MDDRMIDGEL…FGVLSRLEYY (182 aa). ATP is bound by residues Leu21, Arg22, Gly63, Lys66, Thr67, Thr68, 129 to 131, Arg172, Tyr182, and Arg219; that span reads EDF. Residue Thr67 participates in Mg(2+) binding. A small ATPAse domain (RuvB-S) region spans residues 183-253; sequence EIKDLCNIVE…STKQALEMLQ (71 aa). Residues 256–334 form a head domain (RuvB-H) region; sequence DAGLDHVDHK…HLGIKRTGED (79 aa). Arg311 and Arg316 together coordinate DNA.

The protein belongs to the RuvB family. In terms of assembly, homohexamer. Forms an RuvA(8)-RuvB(12)-Holliday junction (HJ) complex. HJ DNA is sandwiched between 2 RuvA tetramers; dsDNA enters through RuvA and exits via RuvB. An RuvB hexamer assembles on each DNA strand where it exits the tetramer. Each RuvB hexamer is contacted by two RuvA subunits (via domain III) on 2 adjacent RuvB subunits; this complex drives branch migration. In the full resolvosome a probable DNA-RuvA(4)-RuvB(12)-RuvC(2) complex forms which resolves the HJ.

It is found in the cytoplasm. The catalysed reaction is ATP + H2O = ADP + phosphate + H(+). Its function is as follows. The RuvA-RuvB-RuvC complex processes Holliday junction (HJ) DNA during genetic recombination and DNA repair, while the RuvA-RuvB complex plays an important role in the rescue of blocked DNA replication forks via replication fork reversal (RFR). RuvA specifically binds to HJ cruciform DNA, conferring on it an open structure. The RuvB hexamer acts as an ATP-dependent pump, pulling dsDNA into and through the RuvAB complex. RuvB forms 2 homohexamers on either side of HJ DNA bound by 1 or 2 RuvA tetramers; 4 subunits per hexamer contact DNA at a time. Coordinated motions by a converter formed by DNA-disengaged RuvB subunits stimulates ATP hydrolysis and nucleotide exchange. Immobilization of the converter enables RuvB to convert the ATP-contained energy into a lever motion, pulling 2 nucleotides of DNA out of the RuvA tetramer per ATP hydrolyzed, thus driving DNA branch migration. The RuvB motors rotate together with the DNA substrate, which together with the progressing nucleotide cycle form the mechanistic basis for DNA recombination by continuous HJ branch migration. Branch migration allows RuvC to scan DNA until it finds its consensus sequence, where it cleaves and resolves cruciform DNA. The chain is Holliday junction branch migration complex subunit RuvB from Oceanobacillus iheyensis (strain DSM 14371 / CIP 107618 / JCM 11309 / KCTC 3954 / HTE831).